The chain runs to 120 residues: NAD(P)H-quinone oxidoreductase subunit 3, chloroplastic (120 aa).

The next 3 helical transmembrane spans lie at 9–29 (IFWAFLIISSVIPILAFLISG), 64–84 (MFALVFVVFDVETVFLYPWAM), and 88–108 (VLGVSVFVEALIFVLILIVGL).

Belongs to the complex I subunit 3 family. NDH is composed of at least 16 different subunits, 5 of which are encoded in the nucleus.

It is found in the plastid. It localises to the chloroplast thylakoid membrane. The catalysed reaction is a plastoquinone + NADH + (n+1) H(+)(in) = a plastoquinol + NAD(+) + n H(+)(out). It carries out the reaction a plastoquinone + NADPH + (n+1) H(+)(in) = a plastoquinol + NADP(+) + n H(+)(out). NDH shuttles electrons from NAD(P)H:plastoquinone, via FMN and iron-sulfur (Fe-S) centers, to quinones in the photosynthetic chain and possibly in a chloroplast respiratory chain. The immediate electron acceptor for the enzyme in this species is believed to be plastoquinone. Couples the redox reaction to proton translocation, and thus conserves the redox energy in a proton gradient. The polypeptide is NAD(P)H-quinone oxidoreductase subunit 3, chloroplastic (Ranunculus macranthus (Large buttercup)).